The following is an 810-amino-acid chain: MSKGPGPGGSAASSAPPAATAQVLQAQPEKPQHYTYLKEFRTEQCPLFVQHKCTQHRPYTCFHWHFVNQRRRRSIRRRDGTFNYSPDVYCTKYDEATGLCPEGDECPFLHRTTGDTERRYHLRYYKTGICIHETDSKGNCTKNGLHCAFAHGPHDLRSPVYDIRELQAMEALQNGQTTVEGSIEGQSAGAASHAMIEKILSEEPRWQETAYVLGNYKTEPCKKPPRLCRQGYACPYYHNSKDRRRSPRKHKYRSSPCPNVKHGDEWGDPGKCENGDACQYCHTRTEQQFHPEIYKSTKCNDMQQSGSCPRGPFCAFAHVEQPPLSDDLQPSSAVSSPTQPGPVLYMPSAAGDSVPVSPSSPHAPDLSALLCRNSSLGSPSNLCGSPPGSIRKPPNLEGIVFPGESGLAPGSYKKAPGFEREDQVGAEYLKNFKCQAKLKPHSLEPRSQEQPLLQPKQDMLGILPAGSPLTSSISSSITSSLAATPPSPVGTSSVPGMNANALPFYPTSDTVESVIESALDDLDLNEFGVAALEKTFDNSTVPHPGSITIGGSLLQSSAPVNIPGSLGSSASFHSASPSPPVSLSSHFLQQPQGHLSQSENTFLGTSASHGSLGLNGMNSSIWEHFASGSFSPGTSPAFLSGPGAAELARLRQELDEANSTIKQWEESWKQAKQACDAWKKEAEEAGERASAAGAECELAREQRDALEVQVKKLQEELERLHAGPEPQALPAFSDLEALSLSTLYSLQKQLRAHLEQVDKAVFHMQSVKCLKCQEQKRAVLPCQHAALCELCAEGSECPICQPGRAHTLQS.

Residues 1 to 24 are disordered; the sequence is MSKGPGPGGSAASSAPPAATAQVL. Over residues 10 to 19 the composition is skewed to low complexity; that stretch reads SAASSAPPAA. C3H1-type zinc fingers lie at residues 84–113, 124–154, 215–241, 251–285, and 293–321; these read YSPD…HRTT, YYKT…HGPH, NYKT…HNSK, KYRS…HTRT, and IYKS…HVEQ. The segment at 239 to 265 is disordered; sequence NSKDRRRSPRKHKYRSSPCPNVKHGDE. Serine 240 bears the Phosphoserine mark. Over residues 241–253 the composition is skewed to basic residues; the sequence is KDRRRSPRKHKYR. The tract at residues 324 to 343 is disordered; that stretch reads LSDDLQPSSAVSSPTQPGPV. The span at 328–338 shows a compositional bias: polar residues; sequence LQPSSAVSSPT. A phosphoserine mark is found at serine 374, serine 378, serine 385, and serine 631. The stretch at 643–723 forms a coiled coil; that stretch reads GAAELARLRQ…QEELERLHAG (81 aa). The segment at 766–801 adopts an RING-type; degenerate zinc-finger fold; it reads SVKCLKCQEQKRAVLPCQHAALCELCAEGSECPICQ.

Belongs to the unkempt family.

The protein resides in the cytoplasm. In terms of biological role, sequence-specific RNA-binding protein which plays an important role in the establishment and maintenance of the early morphology of cortical neurons during embryonic development. Acts as a translation repressor and controls a translationally regulated cell morphology program to ensure proper structuring of the nervous system. Translational control depends on recognition of its binding element within target mRNAs which consists of a mandatory UAG trimer upstream of a U/A-rich motif. Associated with polysomes. This Homo sapiens (Human) protein is RING finger protein unkempt homolog (UNK).